The chain runs to 153 residues: 6,7-dimethyl-8-ribityllumazine synthase (153 aa).

Residues F22, 56-58 (AFE), and 80-82 (AVI) contribute to the 5-amino-6-(D-ribitylamino)uracil site. 85–86 (ST) contributes to the (2S)-2-hydroxy-3-oxobutyl phosphate binding site. H88 serves as the catalytic Proton donor. 5-amino-6-(D-ribitylamino)uracil is bound at residue F113. R127 contacts (2S)-2-hydroxy-3-oxobutyl phosphate.

This sequence belongs to the DMRL synthase family.

The enzyme catalyses (2S)-2-hydroxy-3-oxobutyl phosphate + 5-amino-6-(D-ribitylamino)uracil = 6,7-dimethyl-8-(1-D-ribityl)lumazine + phosphate + 2 H2O + H(+). It functions in the pathway cofactor biosynthesis; riboflavin biosynthesis; riboflavin from 2-hydroxy-3-oxobutyl phosphate and 5-amino-6-(D-ribitylamino)uracil: step 1/2. In terms of biological role, catalyzes the formation of 6,7-dimethyl-8-ribityllumazine by condensation of 5-amino-6-(D-ribitylamino)uracil with 3,4-dihydroxy-2-butanone 4-phosphate. This is the penultimate step in the biosynthesis of riboflavin. This Clostridium novyi (strain NT) protein is 6,7-dimethyl-8-ribityllumazine synthase.